Reading from the N-terminus, the 233-residue chain is Putative peroxiredoxin (233 aa).

A Thioredoxin domain is found at 41-200; sequence AQIGKEAPEF…TIRIVKAIQF (160 aa). The active-site Cysteine sulfenic acid (-SOH) intermediate is Cys87.

The protein belongs to the peroxiredoxin family. AhpC/Prx1 subfamily. As to quaternary structure, homodimer; disulfide-linked, upon oxidation.

The protein localises to the cell membrane. The catalysed reaction is a hydroperoxide + [thioredoxin]-dithiol = an alcohol + [thioredoxin]-disulfide + H2O. Thiol-specific peroxidase that catalyzes the reduction of hydrogen peroxide and organic hydroperoxides to water and alcohols, respectively. Plays a role in cell protection against oxidative stress by detoxifying peroxides and as sensor of hydrogen peroxide-mediated signaling events. This is Putative peroxiredoxin from Entamoeba histolytica (strain ATCC 30459 / HM-1:IMSS / ABRM).